We begin with the raw amino-acid sequence, 522 residues long: Stellatic acid synthase (522 aa).

The helical transmembrane segment at 23–43 (IYGIYEPLLALFAVYSVAVVV) threads the bilayer. 2 N-linked (GlcNAc...) asparagine glycosylation sites follow: asparagine 267 and asparagine 451. Cysteine 464 is a heme binding site. N-linked (GlcNAc...) asparagine glycosylation occurs at asparagine 495.

This sequence belongs to the cytochrome P450 family. The cofactor is heme.

It is found in the membrane. The enzyme catalyses stellata-2,6,19-triene + 3 reduced [NADPH--hemoprotein reductase] + 3 O2 = stellatate + 3 oxidized [NADPH--hemoprotein reductase] + 4 H2O + 4 H(+). It participates in secondary metabolite biosynthesis; terpenoid biosynthesis. Its function is as follows. Cytochrome P450 monooxygenase; part of the gene cluster that mediates the biosynthesis of the sesterterpene stellatic acid. The first step in the pathway is performed by the stellatatriene synthase that possesses both prenyl transferase and terpene cyclase activity, converting isopentenyl diphosphate and dimethylallyl diphosphate into geranylgeranyl diphosphate (GGDP) and then converting GGDP into stellata-2,6,19-triene. The cytochrome P450 monooxygenase Stl-P450 then catalyzes three successive oxidation reactions on the C-20 methyl group to generate the carboxylic acid of stellatic acid. The polypeptide is Stellatic acid synthase (Emericella variicolor (Aspergillus stellatus)).